We begin with the raw amino-acid sequence, 475 residues long: ATP synthase subunit beta (475 aa).

Residue 154 to 161 (GGAGVGKT) coordinates ATP.

The protein belongs to the ATPase alpha/beta chains family. As to quaternary structure, F-type ATPases have 2 components, CF(1) - the catalytic core - and CF(0) - the membrane proton channel. CF(1) has five subunits: alpha(3), beta(3), gamma(1), delta(1), epsilon(1). CF(0) has three main subunits: a(1), b(2) and c(9-12). The alpha and beta chains form an alternating ring which encloses part of the gamma chain. CF(1) is attached to CF(0) by a central stalk formed by the gamma and epsilon chains, while a peripheral stalk is formed by the delta and b chains.

Its subcellular location is the cell inner membrane. The enzyme catalyses ATP + H2O + 4 H(+)(in) = ADP + phosphate + 5 H(+)(out). Produces ATP from ADP in the presence of a proton gradient across the membrane. The catalytic sites are hosted primarily by the beta subunits. This is ATP synthase subunit beta from Hyphomonas neptunium (strain ATCC 15444).